The primary structure comprises 107 residues: Nucleoid-associated protein R00231 (107 aa).

The protein belongs to the YbaB/EbfC family. Homodimer.

Its subcellular location is the cytoplasm. It is found in the nucleoid. Its function is as follows. Binds to DNA and alters its conformation. May be involved in regulation of gene expression, nucleoid organization and DNA protection. The chain is Nucleoid-associated protein R00231 from Rhizobium meliloti (strain 1021) (Ensifer meliloti).